Reading from the N-terminus, the 275-residue chain is Undecaprenyl-diphosphatase 2 (275 aa).

7 helical membrane-spanning segments follow: residues Asn48–Phe68, Gly90–Phe110, Ile117–Ala137, Ile154–Phe174, Ala195–Ile215, Ile223–Val243, and Ile254–Phe274.

It belongs to the UppP family.

It localises to the cell membrane. The enzyme catalyses di-trans,octa-cis-undecaprenyl diphosphate + H2O = di-trans,octa-cis-undecaprenyl phosphate + phosphate + H(+). In terms of biological role, catalyzes the dephosphorylation of undecaprenyl diphosphate (UPP). Confers resistance to bacitracin. The sequence is that of Undecaprenyl-diphosphatase 2 from Shouchella clausii (strain KSM-K16) (Alkalihalobacillus clausii).